A 448-amino-acid chain; its full sequence is Chromosomal replication initiator protein DnaA 1 (448 aa).

The interval 1 to 76 is domain I, interacts with DnaA modulators; it reads MLTSETQNVW…FLPVDMSGEP (76 aa). The tract at residues 76-111 is domain II; the sequence is PAIRFIIAPPQKKIIPPNHFSISSSQKEEQSPNSDV. The domain III, AAA+ region stretch occupies residues 112 to 328; it reads KLNNNYRFEN…GAINRLSAHC (217 aa). ATP-binding residues include G156, G158, K159, and T160. The segment at 329 to 448 is domain IV, binds dsDNA; the sequence is RLLDLNITEE…IGMVRRNIES (120 aa).

The protein belongs to the DnaA family. Oligomerizes as a right-handed, spiral filament on DNA at oriC.

It localises to the cytoplasm. Its function is as follows. Plays an essential role in the initiation and regulation of chromosomal replication. ATP-DnaA binds to the origin of replication (oriC) to initiate formation of the DNA replication initiation complex once per cell cycle. Binds the DnaA box (a 9 base pair repeat at the origin) and separates the double-stranded (ds)DNA. Forms a right-handed helical filament on oriC DNA; dsDNA binds to the exterior of the filament while single-stranded (ss)DNA is stabiized in the filament's interior. The ATP-DnaA-oriC complex binds and stabilizes one strand of the AT-rich DNA unwinding element (DUE), permitting loading of DNA polymerase. After initiation quickly degrades to an ADP-DnaA complex that is not apt for DNA replication. Binds acidic phospholipids. This Protochlamydia amoebophila (strain UWE25) protein is Chromosomal replication initiator protein DnaA 1.